We begin with the raw amino-acid sequence, 212 residues long: Uracil phosphoribosyltransferase (212 aa).

5-phospho-alpha-D-ribose 1-diphosphate contacts are provided by residues arginine 78, arginine 103, and aspartate 130–serine 138. Uracil-binding positions include isoleucine 193 and glycine 198 to alanine 200. Aspartate 199 contributes to the 5-phospho-alpha-D-ribose 1-diphosphate binding site.

Belongs to the UPRTase family. The cofactor is Mg(2+).

The catalysed reaction is UMP + diphosphate = 5-phospho-alpha-D-ribose 1-diphosphate + uracil. Its pathway is pyrimidine metabolism; UMP biosynthesis via salvage pathway; UMP from uracil: step 1/1. Its activity is regulated as follows. Allosterically activated by GTP. Catalyzes the conversion of uracil and 5-phospho-alpha-D-ribose 1-diphosphate (PRPP) to UMP and diphosphate. The chain is Uracil phosphoribosyltransferase from Pseudomonas putida (strain ATCC 700007 / DSM 6899 / JCM 31910 / BCRC 17059 / LMG 24140 / F1).